The following is a 398-amino-acid chain: Probable peptidoglycan glycosyltransferase FtsW (398 aa).

At 1-25 (MCYGGTAMMAFADIKEALTPKPSAQ) the chain is on the cytoplasmic side. The helical transmembrane segment at 26-46 (LYDVPLLYCMLMLMGVGFVMV) threads the bilayer. At 47–69 (TSASMPTADRLFGNIYHFTIRHG) the chain is on the periplasmic side. A helical transmembrane segment spans residues 70–90 (IFLALSFCLFWITTSVPMSWW). Residue Lys-91 is a topological domain, cytoplasmic. A helical transmembrane segment spans residues 92–112 (KANPYLLLVGLGLLLIVLIVG). At 113–120 (REVNGSTR) the chain is on the periplasmic side. The helical transmembrane segment at 121–141 (WIPIGPFNIQASELAKLFFFS) threads the bilayer. At 142–156 (YISGYLVRKRSEVQE) the chain is on the cytoplasmic side. The chain crosses the membrane as a helical span at residues 157 to 177 (NIKGFIKPILVFAAYAGLILM). Over 178–179 (QP) the chain is Periplasmic. A helical membrane pass occupies residues 180–200 (DLGTVVVMFVTTVGLLFLAGA). Residue Lys-201 is a topological domain, cytoplasmic. A helical membrane pass occupies residues 202–222 (LWQFFVLILTGVALVIGLIVL). Over 223–289 (EPYRMARVIG…DFIFAVIAEE (67 aa)) the chain is Periplasmic. The chain crosses the membrane as a helical span at residues 290 to 312 (LGFVGVSSILIVLGTLVFRALLI). Topologically, residues 313–324 (GQNALKNGKEYE) are cytoplasmic. The helical transmembrane segment at 325-345 (GYLALAIGIWFAFQTMVNVGA) threads the bilayer. Topologically, residues 346 to 356 (SAGILPTKGLT) are periplasmic. Residues 357-377 (LPFISYGGSSLLMMTIAAGIL) form a helical membrane-spanning segment. Residues 378 to 398 (LRVDFETKMATKQATSGGAKR) are Cytoplasmic-facing.

Belongs to the SEDS family. FtsW subfamily.

It localises to the cell inner membrane. The catalysed reaction is [GlcNAc-(1-&gt;4)-Mur2Ac(oyl-L-Ala-gamma-D-Glu-L-Lys-D-Ala-D-Ala)](n)-di-trans,octa-cis-undecaprenyl diphosphate + beta-D-GlcNAc-(1-&gt;4)-Mur2Ac(oyl-L-Ala-gamma-D-Glu-L-Lys-D-Ala-D-Ala)-di-trans,octa-cis-undecaprenyl diphosphate = [GlcNAc-(1-&gt;4)-Mur2Ac(oyl-L-Ala-gamma-D-Glu-L-Lys-D-Ala-D-Ala)](n+1)-di-trans,octa-cis-undecaprenyl diphosphate + di-trans,octa-cis-undecaprenyl diphosphate + H(+). Its pathway is cell wall biogenesis; peptidoglycan biosynthesis. Functionally, peptidoglycan polymerase that is essential for cell division. The sequence is that of Probable peptidoglycan glycosyltransferase FtsW from Pseudoalteromonas translucida (strain TAC 125).